A 175-amino-acid chain; its full sequence is Nucleoside triphosphate/diphosphate phosphatase (175 aa).

Arg-23 acts as the Proton donor in catalysis. Mg(2+)-binding residues include Asn-87, Asp-103, Asp-105, Asp-107, Asp-120, and Glu-123.

It belongs to the Ntdp family. The cofactor is Mg(2+).

The catalysed reaction is a ribonucleoside 5'-triphosphate + H2O = a ribonucleoside 5'-diphosphate + phosphate + H(+). It carries out the reaction a ribonucleoside 5'-diphosphate + H2O = a ribonucleoside 5'-phosphate + phosphate + H(+). Functionally, has nucleoside phosphatase activity towards nucleoside triphosphates and nucleoside diphosphates. The chain is Nucleoside triphosphate/diphosphate phosphatase from Listeria innocua serovar 6a (strain ATCC BAA-680 / CLIP 11262).